Consider the following 413-residue polypeptide: Histidine--tRNA ligase (413 aa).

Belongs to the class-II aminoacyl-tRNA synthetase family. In terms of assembly, homodimer.

The protein localises to the cytoplasm. The catalysed reaction is tRNA(His) + L-histidine + ATP = L-histidyl-tRNA(His) + AMP + diphosphate + H(+). In Ehrlichia chaffeensis (strain ATCC CRL-10679 / Arkansas), this protein is Histidine--tRNA ligase.